The chain runs to 276 residues: MSIDSLPPLREVIERHDLMPKKSLGQNFLFDLNLTSKIARQAGDLRDQPVIEVGPGPGGLTRALLAQGAYVTAIERDDRCLEALAEIAAHYPGRLRIIAGDALEQDFTALFPEGPKPRIVANLPYNVGTQLLLNWLLVEPWPPFYSSMTLMFQREVAERIVAKPDSDHYGRLGVLAGWRTQAKIAFDVPPQAFTPPPKVMSSVVHIVPRETPLPCRAEALGQITQAAFGQRRKMLRQSLKSIGGGALLEKTGIDGTRRAETLSVEEFVALANACLP.

Residues N27, L29, G54, E75, D101, and N122 each contribute to the S-adenosyl-L-methionine site.

Belongs to the class I-like SAM-binding methyltransferase superfamily. rRNA adenine N(6)-methyltransferase family. RsmA subfamily.

It is found in the cytoplasm. It catalyses the reaction adenosine(1518)/adenosine(1519) in 16S rRNA + 4 S-adenosyl-L-methionine = N(6)-dimethyladenosine(1518)/N(6)-dimethyladenosine(1519) in 16S rRNA + 4 S-adenosyl-L-homocysteine + 4 H(+). Specifically dimethylates two adjacent adenosines (A1518 and A1519) in the loop of a conserved hairpin near the 3'-end of 16S rRNA in the 30S particle. May play a critical role in biogenesis of 30S subunits. This is Ribosomal RNA small subunit methyltransferase A from Brucella suis (strain ATCC 23445 / NCTC 10510).